A 340-amino-acid polypeptide reads, in one-letter code: Entry-fusion complex protein OPG094 (340 aa).

Gly-2 carries the N-myristoyl glycine; by host lipid modification. At 2–319 (GGRVSVELPK…VQHNIKHSFD (318 aa)) the chain is on the virion surface side. A helical; Signal-anchor for type II membrane protein transmembrane segment spans residues 320–340 (LKLHLISLLSLLVIWILIVAI).

The protein belongs to the orthopoxvirus OPG086 family. In terms of assembly, interacts with OPG143. Component of the entry fusion complex (EFC) composed of OPG053, OPG076, OPG086, OPG094, OPG095, OPG099, OPG107, OPG143, OPG104, OPG147 and OPG155. Except for OPG095 and OPG053, each of the EFC proteins is required for assembly or stability of the complex. Post-translationally, unglycosylated because produced in viral factories instead of the classic ER -Golgi route.

It localises to the virion membrane. In terms of biological role, component of the entry fusion complex (EFC), which consists of 11 proteins. During cell infection, this complex mediates entry of the virion core into the host cytoplasm by a two-step mechanism consisting of lipid mixing of the viral and cellular membranes and subsequent pore formation. In Homo sapiens (Human), this protein is Entry-fusion complex protein OPG094 (OPG094).